We begin with the raw amino-acid sequence, 285 residues long: Aquaporin-6 (285 aa).

Transmembrane regions (helical) follow at residues 36–56, 76–96, and 105–125; these read IFWKSIRAELIGSLVLMVFSC, YCFKSISAHFNPVITIAALLL, and ISLVLAQTLGTLSGASVCYYG. The NPA 1 signature appears at 86-88; sequence NPV. The N-linked (GlcNAc...) asparagine glycan is linked to Asn128. A run of 2 helical transmembrane segments spans residues 143–163 and 177–197; these read VSPAKGFGYEFFGTFVIILTM and GDSNLLPLIFGLSVGLSSGMA. Residues 206-208 carry the NPA 2 motif; that stretch reads NPM. Residues 225–245 traverse the membrane as a helical segment; sequence YIYWIGPIFGCLLAVFTFDYT.

This sequence belongs to the MIP/aquaporin (TC 1.A.8) family.

It is found in the cell membrane. Its function is as follows. Probable water-specific aquaporin that may modulate the water content and osmolytes during anhydrobiosis. The chain is Aquaporin-6 from Milnesium tardigradum (Water bear).